The sequence spans 276 residues: NH(3)-dependent NAD(+) synthetase (276 aa).

43 to 50 (GISGGVDS) contributes to the ATP binding site. D49 serves as a coordination point for Mg(2+). A deamido-NAD(+)-binding site is contributed by R146. Residue T166 participates in ATP binding. E171 provides a ligand contact to Mg(2+). Deamido-NAD(+) contacts are provided by K179 and D186. ATP is bound by residues K195 and T217. 266 to 267 (HK) contacts deamido-NAD(+).

Belongs to the NAD synthetase family. Homodimer.

The catalysed reaction is deamido-NAD(+) + NH4(+) + ATP = AMP + diphosphate + NAD(+) + H(+). It participates in cofactor biosynthesis; NAD(+) biosynthesis; NAD(+) from deamido-NAD(+) (ammonia route): step 1/1. Functionally, catalyzes the ATP-dependent amidation of deamido-NAD to form NAD. Uses ammonia as a nitrogen source. This is NH(3)-dependent NAD(+) synthetase from Vibrio vulnificus (strain YJ016).